The chain runs to 459 residues: Cysteine--tRNA ligase (459 aa).

Cys-28 serves as a coordination point for Zn(2+). The 'HIGH' region motif lies at 30–40 (VTVYDLCHFGH). Residues Cys-209, His-234, and Glu-238 each coordinate Zn(2+). The 'KMSKS' region motif lies at 266 to 270 (KMSKS). ATP is bound at residue Lys-269.

The protein belongs to the class-I aminoacyl-tRNA synthetase family. In terms of assembly, monomer. Requires Zn(2+) as cofactor.

The protein localises to the cytoplasm. It carries out the reaction tRNA(Cys) + L-cysteine + ATP = L-cysteinyl-tRNA(Cys) + AMP + diphosphate. The protein is Cysteine--tRNA ligase of Actinobacillus pleuropneumoniae serotype 5b (strain L20).